Here is a 364-residue protein sequence, read N- to C-terminus: UDP-N-acetylglucosamine--N-acetylmuramyl-(pentapeptide) pyrophosphoryl-undecaprenol N-acetylglucosamine transferase (364 aa).

Residues 10–12 (TGG), Asn128, Arg170, Ser199, Ile250, and Gln295 contribute to the UDP-N-acetyl-alpha-D-glucosamine site.

The protein belongs to the glycosyltransferase 28 family. MurG subfamily.

The protein resides in the cell inner membrane. The catalysed reaction is di-trans,octa-cis-undecaprenyl diphospho-N-acetyl-alpha-D-muramoyl-L-alanyl-D-glutamyl-meso-2,6-diaminopimeloyl-D-alanyl-D-alanine + UDP-N-acetyl-alpha-D-glucosamine = di-trans,octa-cis-undecaprenyl diphospho-[N-acetyl-alpha-D-glucosaminyl-(1-&gt;4)]-N-acetyl-alpha-D-muramoyl-L-alanyl-D-glutamyl-meso-2,6-diaminopimeloyl-D-alanyl-D-alanine + UDP + H(+). Its pathway is cell wall biogenesis; peptidoglycan biosynthesis. Its function is as follows. Cell wall formation. Catalyzes the transfer of a GlcNAc subunit on undecaprenyl-pyrophosphoryl-MurNAc-pentapeptide (lipid intermediate I) to form undecaprenyl-pyrophosphoryl-MurNAc-(pentapeptide)GlcNAc (lipid intermediate II). The sequence is that of UDP-N-acetylglucosamine--N-acetylmuramyl-(pentapeptide) pyrophosphoryl-undecaprenol N-acetylglucosamine transferase from Chlorobium phaeobacteroides (strain DSM 266 / SMG 266 / 2430).